The sequence spans 102 residues: Small ribosomal subunit protein uS10 (102 aa).

The protein belongs to the universal ribosomal protein uS10 family. Part of the 30S ribosomal subunit.

Involved in the binding of tRNA to the ribosomes. The chain is Small ribosomal subunit protein uS10 from Pelotomaculum thermopropionicum (strain DSM 13744 / JCM 10971 / SI).